We begin with the raw amino-acid sequence, 164 residues long: Protein SprT (164 aa).

The region spanning 14 to 156 (QLAESFFKRP…LCRRCRNTLV (143 aa)) is the SprT-like domain. H69 is a binding site for Zn(2+). E70 is a catalytic residue. H73 is a Zn(2+) binding site.

The protein belongs to the SprT family. It depends on Zn(2+) as a cofactor.

It is found in the cytoplasm. The sequence is that of Protein SprT from Pseudomonas fluorescens (strain Pf0-1).